The primary structure comprises 387 residues: Cobalt-precorrin-5B C(1)-methyltransferase (387 aa).

The protein belongs to the CbiD family.

It catalyses the reaction Co-precorrin-5B + S-adenosyl-L-methionine = Co-precorrin-6A + S-adenosyl-L-homocysteine. It functions in the pathway cofactor biosynthesis; adenosylcobalamin biosynthesis; cob(II)yrinate a,c-diamide from sirohydrochlorin (anaerobic route): step 6/10. In terms of biological role, catalyzes the methylation of C-1 in cobalt-precorrin-5B to form cobalt-precorrin-6A. The chain is Cobalt-precorrin-5B C(1)-methyltransferase from Desulfitobacterium hafniense (strain Y51).